A 387-amino-acid polypeptide reads, in one-letter code: 3-ketoacyl-CoA thiolase (387 aa).

The Acyl-thioester intermediate role is filled by cysteine 91. Catalysis depends on proton acceptor residues histidine 343 and cysteine 373.

Belongs to the thiolase-like superfamily. Thiolase family. In terms of assembly, heterotetramer of two alpha chains (FadB) and two beta chains (FadA).

The protein resides in the cytoplasm. It carries out the reaction an acyl-CoA + acetyl-CoA = a 3-oxoacyl-CoA + CoA. The protein operates within lipid metabolism; fatty acid beta-oxidation. Functionally, catalyzes the final step of fatty acid oxidation in which acetyl-CoA is released and the CoA ester of a fatty acid two carbons shorter is formed. This Shewanella sp. (strain MR-7) protein is 3-ketoacyl-CoA thiolase.